We begin with the raw amino-acid sequence, 387 residues long: Formate-dependent phosphoribosylglycinamide formyltransferase (387 aa).

N(1)-(5-phospho-beta-D-ribosyl)glycinamide is bound by residues 12 to 13 (EL) and Glu-72. ATP-binding positions include Arg-104, Lys-145, 150–155 (SSGKGQ), 185–188 (EEFI), and Glu-193. The ATP-grasp domain occupies 109–300 (DLAAKDLKLL…EFELHLRAIL (192 aa)). Mg(2+) is bound by residues Glu-258 and Glu-270. Residues Asp-277, Lys-348, and 355–356 (RR) contribute to the N(1)-(5-phospho-beta-D-ribosyl)glycinamide site.

Belongs to the PurK/PurT family. Homodimer.

It carries out the reaction N(1)-(5-phospho-beta-D-ribosyl)glycinamide + formate + ATP = N(2)-formyl-N(1)-(5-phospho-beta-D-ribosyl)glycinamide + ADP + phosphate + H(+). The protein operates within purine metabolism; IMP biosynthesis via de novo pathway; N(2)-formyl-N(1)-(5-phospho-D-ribosyl)glycinamide from N(1)-(5-phospho-D-ribosyl)glycinamide (formate route): step 1/1. In terms of biological role, involved in the de novo purine biosynthesis. Catalyzes the transfer of formate to 5-phospho-ribosyl-glycinamide (GAR), producing 5-phospho-ribosyl-N-formylglycinamide (FGAR). Formate is provided by PurU via hydrolysis of 10-formyl-tetrahydrofolate. This chain is Formate-dependent phosphoribosylglycinamide formyltransferase, found in Leptospira interrogans serogroup Icterohaemorrhagiae serovar copenhageni (strain Fiocruz L1-130).